Here is an 86-residue protein sequence, read N- to C-terminus: Small ribosomal subunit protein uS17 (86 aa).

The protein belongs to the universal ribosomal protein uS17 family. As to quaternary structure, part of the 30S ribosomal subunit.

Functionally, one of the primary rRNA binding proteins, it binds specifically to the 5'-end of 16S ribosomal RNA. The chain is Small ribosomal subunit protein uS17 from Exiguobacterium sp. (strain ATCC BAA-1283 / AT1b).